Consider the following 36-residue polypeptide: Cytochrome b6-f complex subunit 7 (36 aa).

Residues 9–29 form a helical membrane-spanning segment; the sequence is NGAFIMIGLTLLGLAWGFVII.

Belongs to the PetM family. As to quaternary structure, the 4 large subunits of the cytochrome b6-f complex are cytochrome b6, subunit IV (17 kDa polypeptide, PetD), cytochrome f and the Rieske protein, while the 4 small subunits are PetG, PetL, PetM and PetN. The complex functions as a dimer.

It localises to the cellular thylakoid membrane. Its function is as follows. Component of the cytochrome b6-f complex, which mediates electron transfer between photosystem II (PSII) and photosystem I (PSI), cyclic electron flow around PSI, and state transitions. The sequence is that of Cytochrome b6-f complex subunit 7 from Synechocystis sp. (strain ATCC 27184 / PCC 6803 / Kazusa).